Here is a 171-residue protein sequence, read N- to C-terminus: 3-hydroxydecanoyl-[acyl-carrier-protein] dehydratase (171 aa).

The active site involves His-70.

The protein belongs to the thioester dehydratase family. FabA subfamily. In terms of assembly, homodimer.

The protein localises to the cytoplasm. The enzyme catalyses a (3R)-hydroxyacyl-[ACP] = a (2E)-enoyl-[ACP] + H2O. The catalysed reaction is (3R)-hydroxydecanoyl-[ACP] = (2E)-decenoyl-[ACP] + H2O. It catalyses the reaction (2E)-decenoyl-[ACP] = (3Z)-decenoyl-[ACP]. Its pathway is lipid metabolism; fatty acid biosynthesis. Functionally, necessary for the introduction of cis unsaturation into fatty acids. Catalyzes the dehydration of (3R)-3-hydroxydecanoyl-ACP to E-(2)-decenoyl-ACP and then its isomerization to Z-(3)-decenoyl-ACP. Can catalyze the dehydratase reaction for beta-hydroxyacyl-ACPs with saturated chain lengths up to 16:0, being most active on intermediate chain length. This chain is 3-hydroxydecanoyl-[acyl-carrier-protein] dehydratase, found in Nitrosococcus oceani (strain ATCC 19707 / BCRC 17464 / JCM 30415 / NCIMB 11848 / C-107).